A 534-amino-acid chain; its full sequence is Lysophosphatidylcholine acyltransferase 1 (534 aa).

The tract at residues 1–25 (MRLRGRGPRAAPSSSSGAGDARRLA) is disordered. The Cytoplasmic portion of the chain corresponds to 1–57 (MRLRGRGPRAAPSSSSGAGDARRLAPPGRNPFVHELRLSALQKAQVAFMTLTLFPIR). The segment covering 8–19 (PRAAPSSSSGAG) has biased composition (low complexity). Residues 58-78 (LLFAAFMMLLAWPFALLASLG) form a helical; Signal-anchor for type II membrane protein membrane-spanning segment. The Lumenal segment spans residues 79-534 (PPDKEPEQPL…GRKNSCKKAD (456 aa)). The short motif at 135-140 (HSSYFD) is the HXXXXD motif element. EF-hand domains are found at residues 379–414 (PVSDALEDMFSLFDESGGGEIDLREYVVALSVVCRP) and 451–486 (VSELTVTDLFQAIDQEDKGRITFDDFCGFAEMYPDY). Positions 392, 394, 398, and 403 each coordinate Ca(2+). The short motif at 531 to 534 (KKAD) is the Di-lysine motif element.

This sequence belongs to the 1-acyl-sn-glycerol-3-phosphate acyltransferase family. Predominantly expressed in lung where it is enriched in alveolar type II cells. Expressed at lower levels in spleen and brain. Also detected in erythroleukemic cells and reticulocytes. Weakly or not expressed in other tissues.

It localises to the endoplasmic reticulum membrane. Its subcellular location is the golgi apparatus membrane. The protein resides in the cell membrane. It is found in the lipid droplet. The enzyme catalyses a 1-acyl-sn-glycero-3-phosphocholine + an acyl-CoA = a 1,2-diacyl-sn-glycero-3-phosphocholine + CoA. The catalysed reaction is a 1-O-alkyl-sn-glycero-3-phosphocholine + acetyl-CoA = a 1-O-alkyl-2-acetyl-sn-glycero-3-phosphocholine + CoA. It catalyses the reaction a 1-acyl-sn-glycero-3-phosphate + an acyl-CoA = a 1,2-diacyl-sn-glycero-3-phosphate + CoA. It carries out the reaction a 1-O-(1Z-alkenyl)-sn-glycero-3-phosphocholine + an acyl-CoA = a 1-O-(1Z-alkenyl)-2-acyl-sn-glycero-3-phosphocholine + CoA. The enzyme catalyses 1-acyl-sn-glycero-3-phospho-(1'-sn-glycerol) + an acyl-CoA = a 1,2-diacyl-sn-glycero-3-phospho-(1'-sn-glycerol) + CoA. The catalysed reaction is 1-hexadecanoyl-sn-glycero-3-phosphocholine + hexadecanoyl-CoA = 1,2-dihexadecanoyl-sn-glycero-3-phosphocholine + CoA. It catalyses the reaction 1-O-hexadecyl-sn-glycero-3-phosphocholine + hexadecanoyl-CoA = 1-O-hexadecyl-2-hexadecanoyl-sn-glycero-3-phosphocholine + CoA. It carries out the reaction a 1-O-(1Z-alkenyl)-sn-glycero-3-phosphocholine + hexadecanoyl-CoA = 1-O-(1Z)-alkenyl-2-hexadecanoyl-sn-glycero-3-phosphocholine + CoA. The enzyme catalyses 1-hexadecanoyl-sn-glycero-3-phospho-(1'-sn-glycerol) + hexadecanoyl-CoA = 1,2-dihexadecanoyl-sn-glycero-3-phospho-(1'-sn-glycerol) + CoA. The catalysed reaction is 1-dodecanoyl-sn-glycero-3-phosphocholine + hexadecanoyl-CoA = 1-dodecanoyl-2-hexadecanoyl-sn-glycero-3-phosphocholine + CoA. It catalyses the reaction 1-tetradecanoyl-sn-glycero-3-phosphocholine + hexadecanoyl-CoA = 1-tetradecanoyl-2-hexadecanoyl-sn-glycero-3-phosphocholine + CoA. It carries out the reaction 1-O-octadecyl-sn-glycero-3-phosphocholine + hexadecanoyl-CoA = 1-O-octadecyl-2-hexadecanoyl-sn-glycero-3-phosphocholine + CoA. The enzyme catalyses 1-octadecanoyl-sn-glycero-3-phosphocholine + hexadecanoyl-CoA = 1-octadecanoyl-2-hexadecanoyl-sn-glycero-3-phosphocholine + CoA. The catalysed reaction is 1-(9Z-octadecenoyl)-sn-glycero-3-phosphocholine + hexadecanoyl-CoA = 1-(9Z-octadecenoyl)-2-hexadecanoyl-sn-glycero-3-phosphocholine + CoA. It catalyses the reaction 1-eicosanoyl-sn-glycero-3-phosphocholine + hexadecanoyl-CoA = 1-eicosanoyl-2-hexadecanoyl-sn-glycero-3-phosphocholine + CoA. It carries out the reaction hexanoyl-CoA + 1-hexadecanoyl-sn-glycero-3-phosphocholine = 1-hexadecanoyl-2-hexanoyl-sn-glycero-3-phosphocholine + CoA. The enzyme catalyses octanoyl-CoA + 1-hexadecanoyl-sn-glycero-3-phosphocholine = 1-hexadecanoyl-2-octanoyl-sn-glycero-3-phosphocholine + CoA. The catalysed reaction is decanoyl-CoA + 1-hexadecanoyl-sn-glycero-3-phosphocholine = 1-hexadecanoyl-2-decanoyl-sn-glycero-3-phosphocholine + CoA. It catalyses the reaction dodecanoyl-CoA + 1-hexadecanoyl-sn-glycero-3-phosphocholine = 1-hexadecanoyl-2-dodecanoyl-sn-glycero-3-phosphocholine + CoA. It carries out the reaction tetradecanoyl-CoA + 1-hexadecanoyl-sn-glycero-3-phosphocholine = 1-hexadecanoyl-2-tetradecanoyl-sn-glycero-3-phosphocholine + CoA. The enzyme catalyses 1-hexadecanoyl-sn-glycero-3-phosphocholine + (9Z)-octadecenoyl-CoA = 1-hexadecanoyl-2-(9Z-octadecenoyl)-sn-glycero-3-phosphocholine + CoA. The catalysed reaction is (9Z,12Z)-octadecadienoyl-CoA + 1-hexadecanoyl-sn-glycero-3-phosphocholine = 1-hexadecanoyl-2-(9Z,12Z-octadecadienoyl)-sn-glycero-3-phosphocholine + CoA. It catalyses the reaction (4Z,7Z,10Z,13Z,16Z,19Z)-docosahexaenoyl-CoA + 1-hexadecanoyl-sn-glycero-3-phosphocholine = 1-hexadecanoyl-2-(4Z,7Z,10Z,13Z,16Z,19Z-docosahexaenoyl)-sn-glycero-3-phosphocholine + CoA. It carries out the reaction 1-hexadecanoyl-sn-glycero-3-phosphocholine + acetyl-CoA = 1-hexadecanoyl-2-acetyl-sn-glycero-3-phosphocholine + CoA. The enzyme catalyses eicosanoyl-CoA + 1-hexadecanoyl-sn-glycero-3-phosphocholine = 1-hexadecanoyl-2-eicosanoyl-sn-glycero-3-phosphocholine + CoA. The catalysed reaction is 1-O-hexadecyl-sn-glycero-3-phosphocholine + acetyl-CoA = 1-O-hexadecyl-2-acetyl-sn-glycero-3-phosphocholine + CoA. It catalyses the reaction a 1-acyl-sn-glycero-3-phosphocholine + hexadecanoyl-CoA = 1-acyl-2-hexadecanoyl-sn-glycero-3-phosphocholine + CoA. It carries out the reaction a 1-acyl-sn-glycero-3-phosphate + hexadecanoyl-CoA = 1-acyl-2-hexadecanoyl-sn-glycero-3-phosphate + CoA. The enzyme catalyses 1-acyl-sn-glycero-3-phospho-(1'-sn-glycerol) + hexadecanoyl-CoA = 1-acyl-2-hexadecanoyl-sn-glycero-3-phospho-(1'-sn-glycerol) + CoA. It participates in lipid metabolism; phospholipid metabolism. Not activated by inflammatory stimulation. Inhibited by Cu(2+), Fe(2+), Ca(2+) and Mg(2+). Activity is not affected by Co(2+) or Mn(2+). Exhibits both acyltransferase and acetyltransferase activities. Activity is calcium-independent. Catalyzes the conversion of lysophosphatidylcholine (1-acyl-sn-glycero-3-phosphocholine or LPC) into phosphatidylcholine (1,2-diacyl-sn-glycero-3-phosphocholine or PC). Catalyzes the conversion 1-acyl-sn-glycerol-3-phosphate (lysophosphatidic acid or LPA) into 1,2-diacyl-sn-glycerol-3-phosphate (phosphatidic acid or PA) by incorporating an acyl moiety at the sn-2 position of the glycerol backbone. Displays a clear preference for saturated fatty acyl-CoAs, and 1-myristoyl or 1-palmitoyl LPC as acyl donors and acceptors, respectively. Involved in platelet-activating factor (PAF) biosynthesis by catalyzing the conversion of the PAF precursor, 1-O-alkyl-sn-glycero-3-phosphocholine (lyso-PAF) into 1-O-alkyl-2-acetyl-sn-glycero-3-phosphocholine (PAF). May synthesize phosphatidylcholine in pulmonary surfactant, thereby playing a pivotal role in respiratory physiology. Involved in the regulation of lipid droplet number and size. The protein is Lysophosphatidylcholine acyltransferase 1 (Lpcat1) of Mus musculus (Mouse).